Reading from the N-terminus, the 256-residue chain is Chloroplastic group IIB intron splicing facilitator CRS2, chloroplastic (256 aa).

The N-terminal 45 residues, 1–45 (MSLLAAAIPSTSSHFSAPFLPSFRMPRKSLTAPLHRIRRPRPFTV), are a transit peptide targeting the chloroplast. Tyr-74 provides a ligand contact to tRNA. The active-site Proton acceptor is His-79. The tRNA site is built by Tyr-124, Asn-126, and Asn-172.

This sequence belongs to the PTH family. CRS2 subfamily. Interacts with CAF1 and CAF2. Part of large ribonucleo-protein complexes that include group IIB introns and either CAF1 or CAF2.

Its subcellular location is the plastid. It localises to the chloroplast stroma. Its function is as follows. Required for the splicing of group IIB introns in chloroplasts. Forms complexes with either CAF1 or CAF2 which, in turn, interact with RNA and confer intron specificity of the splicing particles. Has no peptidyl-tRNA hydrolase activity. The polypeptide is Chloroplastic group IIB intron splicing facilitator CRS2, chloroplastic (CRS2) (Zea mays (Maize)).